The chain runs to 110 residues: MTDTEFLDHAEKLLLAVEQGCDRINDTTDADLDAQRSGGMVTITFPNRSQIVINLQKPLHEIWMAAQSGGYHYRLEDGAWKDTKGDGEFFAALTRDASRQSGMPLVFSAS.

Belongs to the frataxin family.

Its function is as follows. Involved in iron-sulfur (Fe-S) cluster assembly. May act as a regulator of Fe-S biogenesis. The protein is Iron-sulfur cluster assembly protein CyaY of Paracidovorax citrulli (strain AAC00-1) (Acidovorax citrulli).